Reading from the N-terminus, the 2352-residue chain is Highly reducing polyketide synthase ZEA2 (2352 aa).

A Ketosynthase family 3 (KS3) domain is found at 9-433; that stretch reads PGPVAIVGLA…GTNGHVVLEA (425 aa). Catalysis depends on for beta-ketoacyl synthase activity residues Cys-181, His-316, and His-356. Residues 544 to 875 are malonyl-CoA:ACP transacylase (MAT) domain; that stretch reads FVFTGQGAQW…LATSLFLQGV (332 aa). Ser-634 (for malonyltransferase activity) is an active-site residue. Residues 923-1058 form an N-terminal hotdog fold region; it reads RSIIGAPVPK…GLITIDYEGN (136 aa). Residues 923–1242 enclose the PKS/mFAS DH domain; that stretch reads RSIIGAPVPK…TSELEMDGAA (320 aa). Residues 925 to 1237 form a dehydratase (DH) domain region; it reads IIGAPVPKMN…VIDFRTSELE (313 aa). Catalysis depends on His-955, which acts as the Proton acceptor; for dehydratase activity. A C-terminal hotdog fold region spans residues 1086–1242; the sequence is PATYAKDRFY…TSELEMDGAA (157 aa). The Proton donor; for dehydratase activity role is filled by Asp-1152. Positions 1643–1955 are enoylreductase (ER) domain; that stretch reads GLLDTLYFVD…QGKHRGKIVL (313 aa). The segment at 1979 to 2159 is catalytic ketoreductase (KRc) domain; the sequence is ATYLFVGGLG…VSVNLGIMRD (181 aa). A Carrier domain is found at 2269 to 2346; sequence KATEIITNAL…SFAGKLASTS (78 aa). O-(pantetheine 4'-phosphoryl)serine is present on Ser-2306.

The protein operates within mycotoxin biosynthesis. Its function is as follows. Highly reducing polyketide synthase; part of the gene cluster that mediates the biosynthesis of zearalenone (ZEA), a nonsteroid estrogen that is a contaminant of cereal grains and causes estrogenic disorders in humans and animals. The ZEA backbone is synthesized from a single acetyl-CoA molecule and eight malonyl-CoA molecules. The reducing polyketide synthase ZEA2 is proposed to synthesize a reduced hexaketide intermediate by using different combinations of its reductive domains during each round of condensation. The hexaketide thioester is then transacylated to the non-reducing polyketide synthase ZEA1 and is further condensed with three malonyl-CoAs without reductive tailoring to yield a mixed reduced/unreduced nonaketide. ZEA1 must be able to interact with ZEA2 to facilitate starter-unit acyltransfer and initiate polyketide biosynthesis. ZEA1 also mediates the required C2-C7 cyclization to form the resorcylate core and catalyzes the formation of the macrolactone. ZEB1 is then responsible for the chemical conversion of beta-zearalenonol (beta-ZOL) to ZEA in the biosynthetic pathway. In Gibberella zeae (strain ATCC MYA-4620 / CBS 123657 / FGSC 9075 / NRRL 31084 / PH-1) (Wheat head blight fungus), this protein is Highly reducing polyketide synthase ZEA2.